The primary structure comprises 122 residues: Large ribosomal subunit protein uL14 (122 aa).

It belongs to the universal ribosomal protein uL14 family. In terms of assembly, part of the 50S ribosomal subunit. Forms a cluster with proteins L3 and L19. In the 70S ribosome, L14 and L19 interact and together make contacts with the 16S rRNA in bridges B5 and B8.

Functionally, binds to 23S rRNA. Forms part of two intersubunit bridges in the 70S ribosome. The sequence is that of Large ribosomal subunit protein uL14 from Synechococcus sp. (strain JA-2-3B'a(2-13)) (Cyanobacteria bacterium Yellowstone B-Prime).